Consider the following 156-residue polypeptide: Organelle RRM domain-containing protein 2, mitochondrial (156 aa).

The transit peptide at 1-28 (MAMAMRLPAISRAVTEVASAPVGLRRLF) directs the protein to the mitochondrion. In terms of domain architecture, RRM spans 56 to 134 (TNLFVSGLSK…WVIFAEYARP (79 aa)). Ser64 is modified (phosphoserine). Positions 137–148 (QSQSYQPQNNMS) are enriched in polar residues. The interval 137-156 (QSQSYQPQNNMSRPPYYGNR) is disordered.

Interacts with RBG3/ORRM3. Binds to RBG2/ORRM5.

The protein resides in the mitochondrion. Involved in C-to-U editing of mitochondrial RNA. Functions as minor mitochondrial editing factor. Controls 6 percent of the mitochondrial editing sites. The sequence is that of Organelle RRM domain-containing protein 2, mitochondrial from Arabidopsis thaliana (Mouse-ear cress).